The primary structure comprises 289 residues: (3R)-3-[(carboxymethyl)amino]fatty acid oxygenase/decarboxylase (289 aa).

A (3R)-3-[(carboxymethyl)amino]fatty acid is bound by residues tyrosine 65, tyrosine 70, and glycine 93. Positions 97 and 99 each coordinate Fe(2+). 2 residues coordinate a (3R)-3-[(carboxymethyl)amino]fatty acid: tyrosine 100 and lysine 158. Histidine 260 contacts Fe(2+). Histidine 264 contacts 2-oxoglutarate. Position 275 (arginine 275) interacts with a (3R)-3-[(carboxymethyl)amino]fatty acid.

It belongs to the TfdA dioxygenase family. The cofactor is Fe(2+).

The catalysed reaction is a (3R)-3-[(carboxymethyl)amino]fatty acid + 2 2-oxoglutarate + 2 O2 = a (3R)-3-isocyanyl-fatty acid + 2 succinate + 3 CO2 + 2 H2O. It carries out the reaction a (3R)-3-[(carboxymethyl)amino]fatty acid + 2-oxoglutarate + O2 = a (3R)-3-{[carboxy(hydroxy)methyl]amino}fatty acid + succinate + CO2. The enzyme catalyses a (3R)-3-{[carboxy(hydroxy)methyl]amino}fatty acid + 2-oxoglutarate + O2 = a (3R)-3-isocyanyl-fatty acid + succinate + 2 CO2 + 2 H2O. Its function is as follows. Involved in the biosynthesis of a unique class of isonitrile lipopeptides (INLPs) that seem to play a role in metal acquisition in M.marinum. Catalyzes the conversion of (3R)-3-[(carboxymethyl)amino]fatty acids to (3R)-3-isocyanyl-fatty acids through an oxidative decarboxylation mechanism, thereby generating the isonitrile group of INLPs. The sequence is that of (3R)-3-[(carboxymethyl)amino]fatty acid oxygenase/decarboxylase from Mycobacterium marinum (strain ATCC BAA-535 / M).